A 62-amino-acid chain; its full sequence is Conotoxin Pn-014 (62 aa).

An N-terminal signal peptide occupies residues 1 to 22 (MRCLPVFVILLLLIASAPSVDA). The propeptide occupies 23–48 (RPKTKDDIPLVSFQDHAKRILQTFES). Tryptophan 61 is modified (tryptophan amide).

Belongs to the conotoxin T superfamily. Post-translationally, contains 2 disulfide bonds that can be either 'C1-C3, C2-C4' or 'C1-C4, C2-C3', since these disulfide connectivities have been observed for conotoxins with cysteine framework V (for examples, see AC P0DQQ7 and AC P81755). In terms of tissue distribution, expressed by the venom duct.

It is found in the secreted. This chain is Conotoxin Pn-014, found in Conus pennaceus (Feathered cone).